An 847-amino-acid chain; its full sequence is Beta-hexosaminidase (847 aa).

Cystine bridges form between Cys31-Cys40, Cys377-Cys385, and Cys484-Cys530. The active-site Proton donor is Glu519.

This sequence belongs to the glycosyl hydrolase 20 family.

The catalysed reaction is Hydrolysis of terminal non-reducing N-acetyl-D-hexosamine residues in N-acetyl-beta-D-hexosaminides.. It functions in the pathway glycan degradation; chitin degradation. Its function is as follows. Hydrolysis of terminal, non-reducing N-acetyl-beta-D-glucosamine residues in chitobiose and higher analogs, and in glycoproteins. In Vibrio vulnificus, this protein is Beta-hexosaminidase (hex).